The sequence spans 260 residues: Phosphate import ATP-binding protein PstB (260 aa).

In terms of domain architecture, ABC transporter spans 14-255; it reads IETENLNLFY…PKNTKTEEYI (242 aa). 46 to 53 contributes to the ATP binding site; the sequence is GPSGCGKS.

Belongs to the ABC transporter superfamily. Phosphate importer (TC 3.A.1.7) family. As to quaternary structure, the complex is composed of two ATP-binding proteins (PstB), two transmembrane proteins (PstC and PstA) and a solute-binding protein (PstS).

It localises to the cell inner membrane. It catalyses the reaction phosphate(out) + ATP + H2O = ADP + 2 phosphate(in) + H(+). Its function is as follows. Part of the ABC transporter complex PstSACB involved in phosphate import. Responsible for energy coupling to the transport system. This chain is Phosphate import ATP-binding protein PstB, found in Borreliella burgdorferi (strain ATCC 35210 / DSM 4680 / CIP 102532 / B31) (Borrelia burgdorferi).